Consider the following 473-residue polypeptide: 3-isopropylmalate dehydratase large subunit (473 aa).

[4Fe-4S] cluster contacts are provided by Cys348, Cys413, and Cys416.

This sequence belongs to the aconitase/IPM isomerase family. LeuC type 1 subfamily. In terms of assembly, heterodimer of LeuC and LeuD. [4Fe-4S] cluster is required as a cofactor.

It catalyses the reaction (2R,3S)-3-isopropylmalate = (2S)-2-isopropylmalate. The protein operates within amino-acid biosynthesis; L-leucine biosynthesis; L-leucine from 3-methyl-2-oxobutanoate: step 2/4. Its function is as follows. Catalyzes the isomerization between 2-isopropylmalate and 3-isopropylmalate, via the formation of 2-isopropylmaleate. This is 3-isopropylmalate dehydratase large subunit from Parvibaculum lavamentivorans (strain DS-1 / DSM 13023 / NCIMB 13966).